Consider the following 430-residue polypeptide: Terminal nucleotidyltransferase 5B (430 aa).

The interval 1-46 (MMPSESETESRDRAAAQVGTAAAAAVAKAAPAGGGPDPEASSASLG) is disordered. A compositionally biased stretch (low complexity) spans 15–44 (AAQVGTAAAAAVAKAAPAGGGPDPEASSAS).

Belongs to the TENT family.

The protein localises to the cytoplasm. It localises to the nucleus. The catalysed reaction is RNA(n) + ATP = RNA(n)-3'-adenine ribonucleotide + diphosphate. Functionally, catalyzes the transfer of one adenosine molecule from an ATP to an mRNA poly(A) tail bearing a 3'-OH terminal group in an ATP hydrolysis-dependent manner. May be involved in maintaining the translation efficiency of at least some genes through preventing degradation of their mRNAs. Prefers RNA molecules that are adenosine-rich close to 3'-end. In addition, may inhibit cell proliferation and cell cycle progression through ubiquitination of beta-catenin/CTNNB1. The protein is Terminal nucleotidyltransferase 5B of Bos taurus (Bovine).